Reading from the N-terminus, the 306-residue chain is Mycothiol acetyltransferase (306 aa).

N-acetyltransferase domains follow at residues 17–163 (VARV…RPMP) and 166–306 (LALS…YRRA). Glu-48 is a 1D-myo-inositol 2-(L-cysteinylamino)-2-deoxy-alpha-D-glucopyranoside binding site. An acetyl-CoA-binding site is contributed by 89-91 (IVV). Residues Glu-192, Lys-232, and Glu-239 each coordinate 1D-myo-inositol 2-(L-cysteinylamino)-2-deoxy-alpha-D-glucopyranoside. Residues 243–245 (LGV) and 250–256 (AARGLGS) contribute to the acetyl-CoA site. Residue Tyr-277 participates in 1D-myo-inositol 2-(L-cysteinylamino)-2-deoxy-alpha-D-glucopyranoside binding.

Belongs to the acetyltransferase family. MshD subfamily. Monomer.

It carries out the reaction 1D-myo-inositol 2-(L-cysteinylamino)-2-deoxy-alpha-D-glucopyranoside + acetyl-CoA = mycothiol + CoA + H(+). Catalyzes the transfer of acetyl from acetyl-CoA to desacetylmycothiol (Cys-GlcN-Ins) to form mycothiol. The chain is Mycothiol acetyltransferase from Clavibacter michiganensis subsp. michiganensis (strain NCPPB 382).